The sequence spans 201 residues: Acyl-homoserine-lactone synthase (201 aa).

The protein belongs to the autoinducer synthase family.

It catalyses the reaction a fatty acyl-[ACP] + S-adenosyl-L-methionine = an N-acyl-L-homoserine lactone + S-methyl-5'-thioadenosine + holo-[ACP] + H(+). Its function is as follows. Required for the synthesis of BHL (N-butanoyl-L-homoserine lactone), and HHL (N-hexanoyl-L-homoserine lactone) autoinducer molecules which bind to RhlR and thus acts in elastase biosynthesis regulation. This chain is Acyl-homoserine-lactone synthase (rhlI), found in Pseudomonas aeruginosa (strain ATCC 15692 / DSM 22644 / CIP 104116 / JCM 14847 / LMG 12228 / 1C / PRS 101 / PAO1).